A 1079-amino-acid chain; its full sequence is Translation initiation factor IF-2 (1079 aa).

Composition is skewed to basic and acidic residues over residues 52-65, 75-90, and 102-134; these read VQAQ…KEGN, RDGD…KAPE, and APER…KEPQ. Residues 52–488 are disordered; sequence VQAQRDGGAR…RGKKDVRPAA (437 aa). Residues 150-184 show a composition bias toward low complexity; the sequence is APVAKVVEAAPAETPAPEAPAVKATVTAEAAPAKT. Residues 185–194 are compositionally biased toward basic and acidic residues; it reads VEPESERPQA. Residues 276–291 show a composition bias toward low complexity; that stretch reads AAVAQQQMQQQAAQQQ. Basic and acidic residues predominate over residues 306–327; it reads GGYRPEGQREGGYRPEGQREGG. Low complexity-rich tracts occupy residues 348 to 370 and 380 to 398; these read EGGY…GPRP and PGAP…APRP. The segment covering 419-429 has biased composition (gly residues); it reads PRPGGFGGAPG. A compositionally biased stretch (basic and acidic residues) spans 461–471; the sequence is PRGRSDDDVMR. The span at 473 to 482 shows a compositional bias: basic residues; that stretch reads PRGRGKRGKK. One can recognise a tr-type G domain in the interval 578 to 745; sequence TRPPVVTIMG…LIAIQAEILE (168 aa). Positions 587–594 are G1; the sequence is GHVDHGKT. 587-594 serves as a coordination point for GTP; the sequence is GHVDHGKT. Residues 612 to 616 are G2; that stretch reads GITQH. Residues 633–636 form a G3 region; sequence DTPG. GTP is bound by residues 633–637 and 687–690; these read DTPGH and NKMD. A G4 region spans residues 687 to 690; that stretch reads NKMD. Positions 723–725 are G5; it reads SAK.

The protein belongs to the TRAFAC class translation factor GTPase superfamily. Classic translation factor GTPase family. IF-2 subfamily.

The protein localises to the cytoplasm. Its function is as follows. One of the essential components for the initiation of protein synthesis. Protects formylmethionyl-tRNA from spontaneous hydrolysis and promotes its binding to the 30S ribosomal subunits. Also involved in the hydrolysis of GTP during the formation of the 70S ribosomal complex. This Nitratidesulfovibrio vulgaris (strain DP4) (Desulfovibrio vulgaris) protein is Translation initiation factor IF-2.